The sequence spans 152 residues: SsrA-binding protein (152 aa).

It belongs to the SmpB family.

It localises to the cytoplasm. Functionally, required for rescue of stalled ribosomes mediated by trans-translation. Binds to transfer-messenger RNA (tmRNA), required for stable association of tmRNA with ribosomes. tmRNA and SmpB together mimic tRNA shape, replacing the anticodon stem-loop with SmpB. tmRNA is encoded by the ssrA gene; the 2 termini fold to resemble tRNA(Ala) and it encodes a 'tag peptide', a short internal open reading frame. During trans-translation Ala-aminoacylated tmRNA acts like a tRNA, entering the A-site of stalled ribosomes, displacing the stalled mRNA. The ribosome then switches to translate the ORF on the tmRNA; the nascent peptide is terminated with the 'tag peptide' encoded by the tmRNA and targeted for degradation. The ribosome is freed to recommence translation, which seems to be the essential function of trans-translation. This chain is SsrA-binding protein, found in Rickettsia peacockii (strain Rustic).